A 457-amino-acid chain; its full sequence is MQKYIVEARSLLALAIPVVIAQLSQTAMGVVDTIMAGSVSATDMAAVAVGTSIWLPAILFGHGLLLALTPTVAQLNGSGRRNQIAHQVRQGFWLAFCVSVLIMVVIYNSDHIIMRMHNIDPVLADKAVGFLHAIMWGAPGYLFFQVLRNQCEGLSKTKPGMVIGFIGLLVNIPINYIFIYGKFGAPALGGVGCGVATGTVYWVMFLMMRWYVTRARSQQDIKLEKGFAAPDWQVMKRLGGLGLPVALALFFEVTLFAVVALLVSPLGIVAVAGHQIALNFSSLMFMLPMSLSVAATIRVGFRLGQGSVDDARVAAYTSIAVGLMLACVTAIFTVVFREHIALLYNKTPEVVVMASHLMLLAALYQLSDAIQVIGSGVLRGYKDTRSIFFITFTAYWLLGLPSGYLLGLTDYIVPAMGPSGFWIGFVIGLTSAAILMALRIRWLQKQPSAFILQKAAH.

A run of 12 helical transmembrane segments spans residues 11–31, 46–66, 93–113, 127–147, 160–180, 188–208, 243–263, 278–300, 316–336, 350–370, 387–407, and 418–438; these read LLALAIPVVIAQLSQTAMGVV, AVAVGTSIWLPAILFGHGLLL, WLAFCVSVLIMVVIYNSDHII, AVGFLHAIMWGAPGYLFFQVL, GMVIGFIGLLVNIPINYIFIY, LGGVGCGVATGTVYWVMFLMM, LPVALALFFEVTLFAVVALLV, LNFSSLMFMLPMSLSVAATIRVG, YTSIAVGLMLACVTAIFTVVF, VVVMASHLMLLAALYQLSDAI, IFFITFTAYWLLGLPSGYLLG, and PSGFWIGFVIGLTSAAILMAL.

This sequence belongs to the multi antimicrobial extrusion (MATE) (TC 2.A.66.1) family. MdtK subfamily.

It is found in the cell inner membrane. In terms of biological role, multidrug efflux pump that functions probably as a Na(+)/drug antiporter. This chain is Multidrug resistance protein MdtK, found in Yersinia enterocolitica serotype O:8 / biotype 1B (strain NCTC 13174 / 8081).